The primary structure comprises 525 residues: Alpha-ketoglutaric semialdehyde dehydrogenase 2 (525 aa).

Residues Lys185, Glu188, and 242–247 (GSRQGG) contribute to the NAD(+) site. Residue Glu266 is the Proton acceptor of the active site. Cys303 (nucleophile) is an active-site residue. Glu394 lines the NAD(+) pocket.

It belongs to the aldehyde dehydrogenase family. In terms of assembly, homodimer.

It carries out the reaction 2,5-dioxopentanoate + NADP(+) + H2O = 2-oxoglutarate + NADPH + 2 H(+). The catalysed reaction is 2,5-dioxopentanoate + NAD(+) + H2O = 2-oxoglutarate + NADH + 2 H(+). It participates in carbohydrate acid metabolism; D-glucarate degradation. Its pathway is carbohydrate acid metabolism; galactarate degradation. Its function is as follows. Catalyzes the NAD(P)(+)-dependent oxidation of alpha-ketoglutaric semialdehyde (alphaKGSA) to alpha-ketoglutarate. Involved in D-glucarate/D-galactarate metabolism. Prefers NAD(+) to NADP(+) as a cosubstrate. The sequence is that of Alpha-ketoglutaric semialdehyde dehydrogenase 2 from Azospirillum brasilense.